The following is a 159-amino-acid chain: ATP synthase subunit b (159 aa).

Residues 2-22 (NISIPQIIAAILNFIILLLIV) form a helical membrane-spanning segment.

Belongs to the ATPase B chain family. F-type ATPases have 2 components, F(1) - the catalytic core - and F(0) - the membrane proton channel. F(1) has five subunits: alpha(3), beta(3), gamma(1), delta(1), epsilon(1). F(0) has three main subunits: a(1), b(2) and c(10-14). The alpha and beta chains form an alternating ring which encloses part of the gamma chain. F(1) is attached to F(0) by a central stalk formed by the gamma and epsilon chains, while a peripheral stalk is formed by the delta and b chains.

The protein localises to the cell membrane. Functionally, f(1)F(0) ATP synthase produces ATP from ADP in the presence of a proton or sodium gradient. F-type ATPases consist of two structural domains, F(1) containing the extramembraneous catalytic core and F(0) containing the membrane proton channel, linked together by a central stalk and a peripheral stalk. During catalysis, ATP synthesis in the catalytic domain of F(1) is coupled via a rotary mechanism of the central stalk subunits to proton translocation. In terms of biological role, component of the F(0) channel, it forms part of the peripheral stalk, linking F(1) to F(0). This is ATP synthase subunit b from Clostridium botulinum (strain Okra / Type B1).